The following is a 355-amino-acid chain: Uroporphyrinogen decarboxylase (355 aa).

Residues arginine 27 to arginine 31, aspartate 78, tyrosine 155, serine 210, and histidine 328 contribute to the substrate site.

Belongs to the uroporphyrinogen decarboxylase family. Homodimer.

The protein resides in the cytoplasm. It carries out the reaction uroporphyrinogen III + 4 H(+) = coproporphyrinogen III + 4 CO2. It functions in the pathway porphyrin-containing compound metabolism; protoporphyrin-IX biosynthesis; coproporphyrinogen-III from 5-aminolevulinate: step 4/4. Catalyzes the decarboxylation of four acetate groups of uroporphyrinogen-III to yield coproporphyrinogen-III. The polypeptide is Uroporphyrinogen decarboxylase (Pseudomonas aeruginosa (strain UCBPP-PA14)).